The sequence spans 70 residues: NAD(P)H-quinone oxidoreductase subunit L (70 aa).

2 consecutive transmembrane segments (helical) span residues Ile2 to Leu22 and Thr39 to Val59.

The protein belongs to the complex I NdhL subunit family. NDH-1 can be composed of about 15 different subunits; different subcomplexes with different compositions have been identified which probably have different functions.

Its subcellular location is the cellular thylakoid membrane. It catalyses the reaction a plastoquinone + NADH + (n+1) H(+)(in) = a plastoquinol + NAD(+) + n H(+)(out). It carries out the reaction a plastoquinone + NADPH + (n+1) H(+)(in) = a plastoquinol + NADP(+) + n H(+)(out). In terms of biological role, NDH-1 shuttles electrons from an unknown electron donor, via FMN and iron-sulfur (Fe-S) centers, to quinones in the respiratory and/or the photosynthetic chain. The immediate electron acceptor for the enzyme in this species is believed to be plastoquinone. Couples the redox reaction to proton translocation, and thus conserves the redox energy in a proton gradient. Cyanobacterial NDH-1 also plays a role in inorganic carbon-concentration. This is NAD(P)H-quinone oxidoreductase subunit L from Trichormus variabilis (strain ATCC 29413 / PCC 7937) (Anabaena variabilis).